Consider the following 348-residue polypeptide: Protein-glutamate methylesterase/protein-glutamine glutaminase 2 (348 aa).

A Response regulatory domain is found at 5 to 122 (KVLIIDDSAL…DLGLSQYRDE (118 aa)). Asp-56 is subject to 4-aspartylphosphate. Positions 157-348 (SLKTGFLCAI…AANIIKHALK (192 aa)) constitute a CheB-type methylesterase domain. Active-site residues include Ser-169, His-195, and Asp-291.

This sequence belongs to the CheB family. Phosphorylated by CheA. Phosphorylation of the N-terminal regulatory domain activates the methylesterase activity.

It is found in the cytoplasm. It carries out the reaction [protein]-L-glutamate 5-O-methyl ester + H2O = L-glutamyl-[protein] + methanol + H(+). The enzyme catalyses L-glutaminyl-[protein] + H2O = L-glutamyl-[protein] + NH4(+). In terms of biological role, involved in chemotaxis. Part of a chemotaxis signal transduction system that modulates chemotaxis in response to various stimuli. Catalyzes the demethylation of specific methylglutamate residues introduced into the chemoreceptors (methyl-accepting chemotaxis proteins or MCP) by CheR. Also mediates the irreversible deamidation of specific glutamine residues to glutamic acid. In Saccharophagus degradans (strain 2-40 / ATCC 43961 / DSM 17024), this protein is Protein-glutamate methylesterase/protein-glutamine glutaminase 2.